A 124-amino-acid chain; its full sequence is Small ribosomal subunit protein uS12cz/uS12cy (124 aa).

The protein belongs to the universal ribosomal protein uS12 family. As to quaternary structure, part of the 30S ribosomal subunit.

It localises to the plastid. The protein localises to the chloroplast. Functionally, with S4 and S5 plays an important role in translational accuracy. Located at the interface of the 30S and 50S subunits. The protein is Small ribosomal subunit protein uS12cz/uS12cy (rps12-A) of Agrostis stolonifera (Creeping bentgrass).